Here is a 393-residue protein sequence, read N- to C-terminus: S-adenosylmethionine synthase (393 aa).

Glu-9 provides a ligand contact to Mg(2+). His-15 contributes to the ATP binding site. Glu-43 contacts K(+). L-methionine is bound by residues Glu-56 and Gln-99. Residues Asp-167–Lys-169, Ser-235–Phe-238, Asp-246, Arg-252–Lys-253, Ala-269, Lys-273, and Lys-277 each bind ATP. Asp-246 provides a ligand contact to L-methionine. Position 277 (Lys-277) interacts with L-methionine.

It belongs to the AdoMet synthase family. As to quaternary structure, homotetramer. Mn(2+) serves as cofactor. It depends on Mg(2+) as a cofactor. Requires Co(2+) as cofactor. K(+) is required as a cofactor.

It localises to the cytoplasm. It catalyses the reaction L-methionine + ATP + H2O = S-adenosyl-L-methionine + phosphate + diphosphate. The protein operates within amino-acid biosynthesis; S-adenosyl-L-methionine biosynthesis; S-adenosyl-L-methionine from L-methionine: step 1/1. Catalyzes the formation of S-adenosylmethionine from methionine and ATP. The reaction comprises two steps that are both catalyzed by the same enzyme: formation of S-adenosylmethionine (AdoMet) and triphosphate, and subsequent hydrolysis of the triphosphate. In Camellia sinensis (Tea plant), this protein is S-adenosylmethionine synthase (SAM).